A 183-amino-acid chain; its full sequence is Shikimate kinase (183 aa).

19–24 (GAGKTT) lines the ATP pocket. Threonine 23 is a Mg(2+) binding site. Residues aspartate 41, arginine 65, and glycine 87 each contribute to the substrate site. An ATP-binding site is contributed by arginine 124. Arginine 143 is a binding site for substrate.

It belongs to the shikimate kinase family. Monomer. Requires Mg(2+) as cofactor.

The protein resides in the cytoplasm. It catalyses the reaction shikimate + ATP = 3-phosphoshikimate + ADP + H(+). It participates in metabolic intermediate biosynthesis; chorismate biosynthesis; chorismate from D-erythrose 4-phosphate and phosphoenolpyruvate: step 5/7. Functionally, catalyzes the specific phosphorylation of the 3-hydroxyl group of shikimic acid using ATP as a cosubstrate. The chain is Shikimate kinase from Thermosynechococcus vestitus (strain NIES-2133 / IAM M-273 / BP-1).